Consider the following 83-residue polypeptide: Putative membrane protein insertion efficiency factor (83 aa).

The interval 64-83 is disordered; the sequence is GGFDPVPLKKDKNSKTTHHH.

It belongs to the UPF0161 family.

The protein localises to the cell membrane. Could be involved in insertion of integral membrane proteins into the membrane. This Staphylococcus epidermidis (strain ATCC 12228 / FDA PCI 1200) protein is Putative membrane protein insertion efficiency factor.